The following is a 419-amino-acid chain: Transcription termination factor Rho (419 aa).

The region spanning 48–123 (DIFGDGVLEI…LKVNKVNYDK (76 aa)) is the Rho RNA-BD domain. RNA-binding regions lie at residues 61-66 (GFGFLR), 78-80 (DIY), and 108-110 (ERY). ATP-binding positions include 169-174 (GRGQRG), 181-186 (KAGKTM), and Arg-212. Residues 284-288 (VLTGG) form an RNA-binding 2 region.

Belongs to the Rho family. In terms of assembly, homohexamer. The homohexamer assembles into an open ring structure.

In terms of biological role, facilitates transcription termination by a mechanism that involves Rho binding to the nascent RNA, activation of Rho's RNA-dependent ATPase activity, and release of the mRNA from the DNA template. In Buchnera aphidicola subsp. Baizongia pistaciae (strain Bp), this protein is Transcription termination factor Rho.